We begin with the raw amino-acid sequence, 92 residues long: Small ribosomal subunit protein uS19c (92 aa).

This sequence belongs to the universal ribosomal protein uS19 family.

The protein localises to the plastid. The protein resides in the chloroplast. In terms of biological role, protein S19 forms a complex with S13 that binds strongly to the 16S ribosomal RNA. This chain is Small ribosomal subunit protein uS19c (rps19), found in Pinus thunbergii (Japanese black pine).